We begin with the raw amino-acid sequence, 685 residues long: E3 ubiquitin-protein ligase RNF6 (685 aa).

Basic and acidic residues-rich tracts occupy residues 1–10 (MNQSRSRSDG), 17–29 (PQDHNHHENERRW), and 88–107 (DLRDGTNYRDSEVPRESSHE). 6 disordered regions span residues 1–29 (MNQSRSRSDGGSEETLPQDHNHHENERRW), 81–107 (EQLASQPDLRDGTNYRDSEVPRESSHE), 121–142 (GNATRSGQNGNQTWRAVSRTNP), 168–273 (DYTD…REGQ), 286–345 (RSNV…RRRG), and 499–576 (EADS…NPNN). 3 stretches are compositionally biased toward polar residues: residues 199–213 (SQTSVNFNGSSSNIP), 250–264 (ASRTNFSSHTNQSGG), and 286–297 (RSNVTVRNTNQR). A compositionally biased stretch (low complexity) spans 303–313 (LRSTSNSRSRS). Composition is skewed to polar residues over residues 314 to 325 (PIQRQSGTVYHN) and 519 to 528 (ELSNLGTDNN). An RING-type zinc finger spans residues 632–673 (CSVCISDYVTGNKLRQLPCMHEFHIHCIDRWLSENCTCPICR).

It belongs to the RNF12 family. Weakly expressed in peripheral blood, spleen, prostate, testis and ovary. According to a report, it is preferentially expressed in testis and ovary and hardly detected in other tissues.

The protein localises to the nucleus. It localises to the cytoplasm. It is found in the cell projection. Its subcellular location is the axon. The protein resides in the PML body. It catalyses the reaction S-ubiquitinyl-[E2 ubiquitin-conjugating enzyme]-L-cysteine + [acceptor protein]-L-lysine = [E2 ubiquitin-conjugating enzyme]-L-cysteine + N(6)-ubiquitinyl-[acceptor protein]-L-lysine.. The protein operates within protein modification; protein ubiquitination. Its function is as follows. E3 ubiquitin-protein ligase mediating 'Lys-48'-linked polyubiquitination of LIMK1 and its subsequent targeting to the proteasome for degradation. Negatively regulates axonal outgrowth through regulation of the LIMK1 turnover. Mediates 'Lys-6' and 'Lys-27'-linked polyubiquitination of AR/androgen receptor thereby modulating its transcriptional activity. May also bind DNA and function as a transcriptional regulator. Mediates polyubiquitination of QKI in macrophages, leading to its degradation. This is E3 ubiquitin-protein ligase RNF6 from Homo sapiens (Human).